We begin with the raw amino-acid sequence, 235 residues long: Small ribosomal subunit protein uS2c (235 aa).

This sequence belongs to the universal ribosomal protein uS2 family.

It is found in the plastid. Its subcellular location is the chloroplast. The protein is Small ribosomal subunit protein uS2c (rps2) of Zygnema circumcarinatum (Green alga).